The sequence spans 125 residues: Large ribosomal subunit protein bL12 (125 aa).

It belongs to the bacterial ribosomal protein bL12 family. In terms of assembly, homodimer. Part of the ribosomal stalk of the 50S ribosomal subunit. Forms a multimeric L10(L12)X complex, where L10 forms an elongated spine to which 2 to 4 L12 dimers bind in a sequential fashion. Binds GTP-bound translation factors.

In terms of biological role, forms part of the ribosomal stalk which helps the ribosome interact with GTP-bound translation factors. Is thus essential for accurate translation. The protein is Large ribosomal subunit protein bL12 of Francisella tularensis subsp. tularensis (strain SCHU S4 / Schu 4).